A 127-amino-acid chain; its full sequence is MSVEVDGFNASPLFKELHEGLADKSKAEEAVKAVNAVIVITLKNKEGKEQSWVLDLKKAGTLAKVDGAAPKGDVQLILKDVDFVKLANNKVNGQKLFMNGKLKVKGNMMKATAIESVFKKLDPRPKL.

Residues 14–119 (FKELHEGLAD…KATAIESVFK (106 aa)) enclose the SCP2 domain. Residues 33–41 (AVNAVIVIT) are hydrophobic. The tract at residues 43-52 (KNKEGKEQSW) is hydrophilic.

Monomer.

Its subcellular location is the peroxisome. The protein operates within lipid metabolism; fatty acid metabolism. Its function is as follows. Is involved in beta-oxidation of long-chain fatty acids. Its exact function is unknown, but possesses a nonspecific lipid-transfer activity, despite the absence of a cysteine residue thought to be essential for the activity of its mammalian counterparts. This chain is Oleate-induced peroxisomal protein POX18 (POX18), found in Candida maltosa (Yeast).